The chain runs to 477 residues: UDP-N-acetylmuramate--L-alanine ligase (477 aa).

Residue Gly-122–Thr-128 participates in ATP binding.

This sequence belongs to the MurCDEF family.

It is found in the cytoplasm. The catalysed reaction is UDP-N-acetyl-alpha-D-muramate + L-alanine + ATP = UDP-N-acetyl-alpha-D-muramoyl-L-alanine + ADP + phosphate + H(+). It participates in cell wall biogenesis; peptidoglycan biosynthesis. Its function is as follows. Cell wall formation. The sequence is that of UDP-N-acetylmuramate--L-alanine ligase from Xanthomonas campestris pv. campestris (strain 8004).